Reading from the N-terminus, the 374-residue chain is Pectate lyase 1 (374 aa).

The signal sequence occupies residues 1–22 (MKYLLPSAAAGLLLLAAQPTMA). A disulfide bridge connects residues cysteine 93 and cysteine 176. 4 residues coordinate Ca(2+): aspartate 150, aspartate 152, glutamate 187, and aspartate 191. Residue arginine 239 is part of the active site. A disulfide bond links cysteine 350 and cysteine 373.

It belongs to the polysaccharide lyase 1 family. PLADES subfamily. Ca(2+) serves as cofactor.

It is found in the secreted. It catalyses the reaction Eliminative cleavage of (1-&gt;4)-alpha-D-galacturonan to give oligosaccharides with 4-deoxy-alpha-D-galact-4-enuronosyl groups at their non-reducing ends.. Its pathway is glycan metabolism; pectin degradation; 2-dehydro-3-deoxy-D-gluconate from pectin: step 2/5. Functionally, involved in maceration and soft-rotting of plant tissue. This chain is Pectate lyase 1 (pel1), found in Pectobacterium atrosepticum (strain SCRI 1043 / ATCC BAA-672) (Erwinia carotovora subsp. atroseptica).